The chain runs to 206 residues: Uridine kinase (206 aa).

9 to 16 (GGSGSGKT) lines the ATP pocket.

The protein belongs to the uridine kinase family.

The protein resides in the cytoplasm. It carries out the reaction uridine + ATP = UMP + ADP + H(+). It catalyses the reaction cytidine + ATP = CMP + ADP + H(+). The protein operates within pyrimidine metabolism; CTP biosynthesis via salvage pathway; CTP from cytidine: step 1/3. Its pathway is pyrimidine metabolism; UMP biosynthesis via salvage pathway; UMP from uridine: step 1/1. The chain is Uridine kinase from Borrelia turicatae (strain 91E135).